Reading from the N-terminus, the 359-residue chain is Uroporphyrinogen decarboxylase (359 aa).

Arg-28, Ala-30, Arg-32, Asp-79, Tyr-157, Ser-212, and His-335 together coordinate coproporphyrinogen III.

This sequence belongs to the uroporphyrinogen decarboxylase family. In terms of assembly, monomer.

The protein resides in the nucleus. It localises to the cytoplasm. The catalysed reaction is uroporphyrinogen III + 4 H(+) = coproporphyrinogen III + 4 CO2. It catalyses the reaction uroporphyrinogen I + 4 H(+) = coproporphyrinogen I + 4 CO2. It functions in the pathway porphyrin-containing compound metabolism; protoporphyrin-IX biosynthesis; coproporphyrinogen-III from 5-aminolevulinate: step 4/4. In terms of biological role, catalyzes the sequential decarboxylation of four acetate groups of uroporphyrinogen-III (octacarboxyporphyrin) to yield coproporphyrinogen-III (tetracarboxyporphyrin) with the formation of intermediate hepta-, hexa- and penta-carboxylate porphyrinogens in the heme biosynthesis pathway. Acts on a number of porphyrinogens, but only coproporphyrinogen III can ultimately be converted to heme. The protein is Uroporphyrinogen decarboxylase (hem12) of Schizosaccharomyces pombe (strain 972 / ATCC 24843) (Fission yeast).